We begin with the raw amino-acid sequence, 566 residues long: MEKYENLGLVGEGSYGMVMKCRNKDSGRIVAIKKFLESDDDKMVKKIAMREIKLLKQLRHENLVNLLEVCKKKKRWYLVFEFVDHTILDDLELFPNGLDDQVVQKYLFQIINGIGFCHSHNIIHRDIKPENILVSQSGVVKLCDFGFARTLAAPGEVYTDYVATRWYRAPELLVGDVKYGKAVDVWAIGCLVTEMLMGEPLFPGDSDIDQLYLIMRCLGNLIPRHQELFYKNPVFAGVRLPEIKESEPLERRYPKLSEVVIDLAKKCLHVDPDKRPFCAELLHHDFFQMDGFAERFSQELQMKVQKDARNISLSKKSQNRKKEKEKDDSLGEERKTLVVQDTNVDSKFKDSKVFKIKGSKIDGEKVDKGNRAAVSMTVGPSHIKAVPSTSLRDCSNVSVDHTRNPGMAIPPLTHNLSAVAPGINSGMGTIPGVQSYRVDEKTKKYCIPFVKPNKHSPSGIYNMNVTTSVSSEKNLLQANKKRGEYSKTDVRLPELNYNHLPELRALEGIARNSRLIRKENKILSESRIPSLAAIDLHTPNIAVHQVSGSPLSDGSEADSPWMEHQH.

One can recognise a Protein kinase domain in the interval 4-287 (YENLGLVGEG…CAELLHHDFF (284 aa)). ATP contacts are provided by residues 10 to 18 (VGEGSYGMV) and K33. The [NKR]KIAxRE motif lies at 45-51 (KKIAMRE). The active-site Proton acceptor is D126. Disordered stretches follow at residues 307–334 (DARN…GEER) and 545–566 (QVSG…EHQH). The span at 320-334 (RKKEKEKDDSLGEER) shows a compositional bias: basic and acidic residues.

The protein belongs to the protein kinase superfamily. CMGC Ser/Thr protein kinase family. CDC2/CDKX subfamily.

Its subcellular location is the cytoplasm. The protein resides in the nucleus. The enzyme catalyses L-seryl-[protein] + ATP = O-phospho-L-seryl-[protein] + ADP + H(+). It catalyses the reaction L-threonyl-[protein] + ATP = O-phospho-L-threonyl-[protein] + ADP + H(+). This Oryctolagus cuniculus (Rabbit) protein is Cyclin-dependent kinase-like 2.